A 346-amino-acid polypeptide reads, in one-letter code: Putative D-alanine--D-lactate ligase (346 aa).

Residues 137–338 enclose the ATP-grasp domain; sequence YVVARSAGIA…LSEVIDRTLS (202 aa). Position 163 to 216 (163 to 216) interacts with ATP; sequence RLTYPVFVKPARSGSSFGVSKVCRPEDLATAVESARRYDTKVLIEAAVVGSEVG. Positions 292, 305, and 307 each coordinate Mg(2+).

Belongs to the D-alanine--D-alanine ligase family. It depends on Mg(2+) as a cofactor. The cofactor is Mn(2+).

Its subcellular location is the cell membrane. Required for resistance to glycopeptides antibiotics. D-Ala--D-Ala ligase of altered specificity which catalyzes ester bond formation between D-Ala and various D-hydroxy acids; producing a peptidoglycan which does not terminate by D-alanine but by D-lactate, thus preventing vancomycin binding. The sequence is that of Putative D-alanine--D-lactate ligase from Streptomyces coelicolor (strain ATCC BAA-471 / A3(2) / M145).